We begin with the raw amino-acid sequence, 94 residues long: MGRSLKKGPYVDKKLLNKIKEMNESGKKKVIKTWSRDSTIFPEMVGHTIAVHDGQKHVPVYITEDMVGHKLGEFAPTRKFRGHGAHTERSTALK.

The protein belongs to the universal ribosomal protein uS19 family.

Its function is as follows. Protein S19 forms a complex with S13 that binds strongly to the 16S ribosomal RNA. The chain is Small ribosomal subunit protein uS19 from Halothermothrix orenii (strain H 168 / OCM 544 / DSM 9562).